We begin with the raw amino-acid sequence, 309 residues long: HPr kinase/phosphorylase (309 aa).

Active-site residues include His138 and Lys159. 153–160 (GQSGVGKS) lines the ATP pocket. Ser160 contacts Mg(2+). Catalysis depends on Asp177, which acts as the Proton acceptor; for phosphorylation activity. Proton donor; for dephosphorylation activity. The important for the catalytic mechanism of both phosphorylation and dephosphorylation stretch occupies residues 201–210 (LEIRGLGIIN). Position 202 (Glu202) interacts with Mg(2+). Arg243 is an active-site residue. The tract at residues 264–269 (PVRPGR) is important for the catalytic mechanism of dephosphorylation.

The protein belongs to the HPrK/P family. As to quaternary structure, homohexamer. It depends on Mg(2+) as a cofactor.

The enzyme catalyses [HPr protein]-L-serine + ATP = [HPr protein]-O-phospho-L-serine + ADP + H(+). It carries out the reaction [HPr protein]-O-phospho-L-serine + phosphate + H(+) = [HPr protein]-L-serine + diphosphate. Catalyzes the ATP- as well as the pyrophosphate-dependent phosphorylation of a specific serine residue in HPr, a phosphocarrier protein of the phosphoenolpyruvate-dependent sugar phosphotransferase system (PTS). HprK/P also catalyzes the pyrophosphate-producing, inorganic phosphate-dependent dephosphorylation (phosphorolysis) of seryl-phosphorylated HPr (P-Ser-HPr). The two antagonistic activities of HprK/P are regulated by several intracellular metabolites, which change their concentration in response to the absence or presence of rapidly metabolisable carbon sources (glucose, fructose, etc.) in the growth medium. Also phosphorylates/dephosphorylates the HPr-like catabolite repression protein crh on a specific serine residue. Therefore, by controlling the phosphorylation state of HPr and crh, HPrK/P is a sensor enzyme that plays a major role in the regulation of carbon metabolism and sugar transport: it mediates carbon catabolite repression (CCR), and regulates PTS-catalyzed carbohydrate uptake and inducer exclusion. The polypeptide is HPr kinase/phosphorylase (Bacillus anthracis (strain A0248)).